The primary structure comprises 246 residues: UDP-2,3-diacylglucosamine hydrolase (246 aa).

Mn(2+) contacts are provided by aspartate 8, histidine 10, aspartate 41, asparagine 79, and histidine 114. Asparagine 79 to arginine 80 contacts substrate. Substrate is bound by residues aspartate 122, serine 160, asparagine 164, lysine 167, and histidine 195. The Mn(2+) site is built by histidine 195 and histidine 197.

It belongs to the LpxH family. Mn(2+) is required as a cofactor.

It localises to the cell inner membrane. The catalysed reaction is UDP-2-N,3-O-bis[(3R)-3-hydroxytetradecanoyl]-alpha-D-glucosamine + H2O = 2-N,3-O-bis[(3R)-3-hydroxytetradecanoyl]-alpha-D-glucosaminyl 1-phosphate + UMP + 2 H(+). Its pathway is glycolipid biosynthesis; lipid IV(A) biosynthesis; lipid IV(A) from (3R)-3-hydroxytetradecanoyl-[acyl-carrier-protein] and UDP-N-acetyl-alpha-D-glucosamine: step 4/6. Hydrolyzes the pyrophosphate bond of UDP-2,3-diacylglucosamine to yield 2,3-diacylglucosamine 1-phosphate (lipid X) and UMP by catalyzing the attack of water at the alpha-P atom. Involved in the biosynthesis of lipid A, a phosphorylated glycolipid that anchors the lipopolysaccharide to the outer membrane of the cell. The protein is UDP-2,3-diacylglucosamine hydrolase of Chromohalobacter salexigens (strain ATCC BAA-138 / DSM 3043 / CIP 106854 / NCIMB 13768 / 1H11).